The primary structure comprises 378 residues: Probable pectin lyase A (378 aa).

Positions 1 to 18 (MKYASFLALVGFITSTSA) are cleaved as a signal peptide. 2 cysteine pairs are disulfide-bonded: Cys81–Cys100 and Cys90–Cys224. Residue Arg254 is part of the active site. Cysteines 321 and 329 form a disulfide.

Belongs to the polysaccharide lyase 1 family.

The protein localises to the secreted. It catalyses the reaction Eliminative cleavage of (1-&gt;4)-alpha-D-galacturonan methyl ester to give oligosaccharides with 4-deoxy-6-O-methyl-alpha-D-galact-4-enuronosyl groups at their non-reducing ends.. Its function is as follows. Pectinolytic enzymes consist of four classes of enzymes: pectin lyase, polygalacturonase, pectin methylesterase and rhamnogalacturonase. Among pectinolytic enzymes, pectin lyase is the most important in depolymerization of pectin, since it cleaves internal glycosidic bonds of highly methylated pectins. The polypeptide is Probable pectin lyase A (pelA) (Aspergillus clavatus (strain ATCC 1007 / CBS 513.65 / DSM 816 / NCTC 3887 / NRRL 1 / QM 1276 / 107)).